The primary structure comprises 579 residues: Folliculin (579 aa).

The disordered stretch occupies residues 31–82 (QGAGSGDSPDQVEQAEEEEGGIQMSSRVRAHSPAEGASSESSSPGPKKSDMC). Phosphoserine is present on residues S62 and S73. A compositionally biased stretch (low complexity) spans 63 to 76 (PAEGASSESSSPGP). The uDENN FLCN/SMCR8-type domain maps to 86 to 242 (RSLAVGHPGY…RNGNAARSLT (157 aa)). Residues 287–310 (EKLADLEEESESWDNSEAEEEEKA) adopt a coiled-coil conformation. Positions 294 to 308 (EESESWDNSEAEEEE) are enriched in acidic residues. Residues 294–323 (EESESWDNSEAEEEEKAPVTPEGAEGRELT) form a disordered region. A phosphoserine mark is found at S302, S406, S537, S542, and S571. The cDENN FLCN/SMCR8-type domain maps to 339 to 491 (QPPKLTGFKS…ILNKIEAALT (153 aa)). The dDENN FLCN/SMCR8-type domain occupies 493 to 558 (QNLSVDVVDQ…LLKFWMTGLS (66 aa)).

The protein belongs to the folliculin family. Interacts (via C-terminus) with FNIP1 or FNIP2 (via C-terminus). Component of the lysosomal folliculin complex (LFC), composed of FLCN, FNIP1 (or FNIP2), RagA/RRAGA or RagB/RRAGB GDP-bound, RagC/RRAGC or RagD/RRAGD GTP-bound, and Ragulator. Interaction with FNIP1 or FNIP2 mediates indirect interaction with the PRKAA1, PRKAB1 and PRKAG1 subunits of 5'-AMP-activated protein kinase (AMPK). Interacts with HSP90AA1 in the presence of FNIP1. Interacts with HSP70, STUB1, CDC37, AHSA1, CCT2, STIP1, PTGES3 and PPP5C. Interacts with GABARAP; interaction takes place in the presence of FNIP1 and/or FNIP2. Interacts with RILP; the interaction is direct and promotes association between RILP and RAB34. Interacts with KIF3A and KIF3B. Interacts with lactate dehydrogenase LDHA, but not LDHB; the interaction is direct, may preferentially bind LDHA dimers rather than tetramers, and regulates LDHA activity, acting as an uncompetitive inhibitor. Phosphorylation by ULK1 modulates the interaction with GABARAP and is required to regulate autophagy. As to expression, highly expressed in adult heart, pancreas, and prostate with moderate expression in adult brain, kidney, liver, adipose tissue and lung.

The protein resides in the lysosome membrane. It localises to the cytoplasm. The protein localises to the cytosol. Its subcellular location is the cell projection. It is found in the cilium. The protein resides in the cytoskeleton. It localises to the microtubule organizing center. The protein localises to the centrosome. Its subcellular location is the spindle. It is found in the nucleus. Its activity is regulated as follows. GTPase-activating activity is inhibited in the folliculin complex (LFC), which stabilizes the GDP-bound state of RagA/RRAGA (or RagB/RRAGB), because Arg-164 is located far from the RagC/RRAGC or RagD/RRAGD nucleotide pocket. Disassembly of the LFC complex upon amino acid restimulation liberates the GTPase-activating activity. Multi-functional protein, involved in both the cellular response to amino acid availability and in the regulation of glycolysis. GTPase-activating protein that plays a key role in the cellular response to amino acid availability through regulation of the non-canonical mTORC1 signaling cascade controlling the MiT/TFE factors TFEB and TFE3. Activates mTORC1 by acting as a GTPase-activating protein: specifically stimulates GTP hydrolysis by RagC/RRAGC or RagD/RRAGD, promoting the conversion to the GDP-bound state of RagC/RRAGC or RagD/RRAGD, and thereby activating the kinase activity of mTORC1. The GTPase-activating activity is inhibited during starvation and activated in presence of nutrients. Acts as a key component for non-canonical mTORC1-dependent control of the MiT/TFE factors TFEB and TFE3, while it is not involved in mTORC1-dependent phosphorylation of canonical RPS6KB1/S6K1 and EIF4EBP1/4E-BP1. In low-amino acid conditions, the lysosomal folliculin complex (LFC) is formed on the membrane of lysosomes, which inhibits the GTPase-activating activity of FLCN, inactivates mTORC1 and maximizes nuclear translocation of TFEB and TFE3. Upon amino acid restimulation, RagA/RRAGA (or RagB/RRAGB) nucleotide exchange promotes disassembly of the LFC complex and liberates the GTPase-activating activity of FLCN, leading to activation of mTORC1 and subsequent cytoplasmic retention of TFEB and TFE3. Indirectly acts as a positive regulator of Wnt signaling by promoting mTOR-dependent cytoplasmic retention of MiT/TFE factor TFE3. Required for the exit of hematopoietic stem cell from pluripotency by promoting mTOR-dependent cytoplasmic retention of TFE3, thereby increasing Wnt signaling. Involved in the control of embryonic stem cells differentiation; together with LAMTOR1 it is necessary to recruit and activate RagC/RRAGC and RagD/RRAGD at the lysosomes, and to induce exit of embryonic stem cells from pluripotency via non-canonical, mTOR-independent TFE3 inactivation. Acts as an inhibitor of browning of adipose tissue by regulating mTOR-dependent cytoplasmic retention of TFE3. In response to flow stress, regulates STK11/LKB1 accumulation and mTORC1 activation through primary cilia: may act by recruiting STK11/LKB1 to primary cilia for activation of AMPK resided at basal bodies, causing mTORC1 down-regulation. Together with FNIP1 and/or FNIP2, regulates autophagy: following phosphorylation by ULK1, interacts with GABARAP and promotes autophagy. Required for starvation-induced perinuclear clustering of lysosomes by promoting association of RILP with its effector RAB34. Regulates glycolysis by binding to lactate dehydrogenase LDHA, acting as an uncompetitive inhibitor. The sequence is that of Folliculin from Mus musculus (Mouse).